A 180-amino-acid chain; its full sequence is Small ribosomal subunit protein uS5 (180 aa).

Residues 1-26 (MAEEKDKKQSSRRRNNRRTEKESEWQ) form a disordered region. The span at 17–26 (RRTEKESEWQ) shows a compositional bias: basic and acidic residues. One can recognise an S5 DRBM domain in the interval 25 to 88 (WQERVVQIRR…ADGKKHLVNV (64 aa)).

Belongs to the universal ribosomal protein uS5 family. Part of the 30S ribosomal subunit. Contacts proteins S4 and S8.

In terms of biological role, with S4 and S12 plays an important role in translational accuracy. Located at the back of the 30S subunit body where it stabilizes the conformation of the head with respect to the body. The chain is Small ribosomal subunit protein uS5 from Synechococcus elongatus (strain ATCC 33912 / PCC 7942 / FACHB-805) (Anacystis nidulans R2).